The sequence spans 260 residues: Indole-3-glycerol phosphate synthase (260 aa).

The protein belongs to the TrpC family.

The enzyme catalyses 1-(2-carboxyphenylamino)-1-deoxy-D-ribulose 5-phosphate + H(+) = (1S,2R)-1-C-(indol-3-yl)glycerol 3-phosphate + CO2 + H2O. The protein operates within amino-acid biosynthesis; L-tryptophan biosynthesis; L-tryptophan from chorismate: step 4/5. This Leifsonia xyli subsp. xyli (strain CTCB07) protein is Indole-3-glycerol phosphate synthase.